A 652-amino-acid polypeptide reads, in one-letter code: DNA ligase (652 aa).

Residues 29–33, 78–79, and glutamate 107 each bind NAD(+); these read DSEYD and SL. The active-site N6-AMP-lysine intermediate is lysine 109. NAD(+) contacts are provided by arginine 130, glutamate 164, lysine 278, and lysine 302. Cysteine 395, cysteine 398, cysteine 413, and cysteine 418 together coordinate Zn(2+). Residues 577 to 652 form the BRCT domain; it reads VADAALSGLT…VRDEAWLESL (76 aa).

The protein belongs to the NAD-dependent DNA ligase family. LigA subfamily. Mg(2+) is required as a cofactor. It depends on Mn(2+) as a cofactor.

It carries out the reaction NAD(+) + (deoxyribonucleotide)n-3'-hydroxyl + 5'-phospho-(deoxyribonucleotide)m = (deoxyribonucleotide)n+m + AMP + beta-nicotinamide D-nucleotide.. Functionally, DNA ligase that catalyzes the formation of phosphodiester linkages between 5'-phosphoryl and 3'-hydroxyl groups in double-stranded DNA using NAD as a coenzyme and as the energy source for the reaction. It is essential for DNA replication and repair of damaged DNA. This is DNA ligase from Streptococcus pneumoniae serotype 2 (strain D39 / NCTC 7466).